A 912-amino-acid polypeptide reads, in one-letter code: Probable transmembrane GTPase FZO-like, chloroplastic (912 aa).

The transit peptide at 1–54 (MRTLISHRQCVTSPFLISAASPPFPGRCFKLSSFTPPRHRRFSSLSIRNISHES) directs the protein to the chloroplast. Residues 51-71 (SHESADQTSSSRPRTLYPGGY) are disordered. The Stromal segment spans residues 55-773 (ADQTSSSRPR…SKRLEQDIRE (719 aa)). GTP contacts are provided by residues 359–364 (NSGKST) and Ser-521. The helical transmembrane segment at 774–794 (VFFVTVGGLGAAGLSASLLTS) threads the bilayer. Topologically, residues 795 to 801 (VLPTTLE) are chloroplast intermembrane. A helical membrane pass occupies residues 802–822 (DLLALGLCSAGGYVAIANFPY). Over 823–912 (RRQAIIGKVN…LHVSRDEMRL (90 aa)) the chain is Stromal. A coiled-coil region spans residues 877–904 (DRLLGIQKELSDIRSKLQLLQVDIDNLH).

Belongs to the TRAFAC class dynamin-like GTPase superfamily. Dynamin/Fzo/YdjA family. Mitofusin subfamily.

The protein resides in the plastid. It is found in the chloroplast inner membrane. The protein localises to the chloroplast thylakoid membrane. Its function is as follows. Probable membrane-remodeling GTPase that plays a unique role in the in the determination of thylakoid and chloroplast morphology and regulates organization of the thylakoid network. Not involved in the determination of mitochondrial morphology or ultrastructure. In Arabidopsis thaliana (Mouse-ear cress), this protein is Probable transmembrane GTPase FZO-like, chloroplastic.